We begin with the raw amino-acid sequence, 261 residues long: Proteasome subunit alpha type-4 (261 aa).

Serine 13 and serine 75 each carry phosphoserine. At lysine 127 the chain carries N6-acetyllysine. A Phosphoserine modification is found at serine 173. Lysine 176 is subject to N6-acetyllysine. Residues histidine 240–lysine 261 are disordered.

This sequence belongs to the peptidase T1A family. The 26S proteasome consists of a 20S proteasome core and two 19S regulatory subunits. The 20S proteasome core is a barrel-shaped complex made of 28 subunits that are arranged in four stacked rings. The two outer rings are each formed by seven alpha subunits, and the two inner rings are formed by seven beta subunits. The proteolytic activity is exerted by three beta-subunits PSMB5, PSMB6 and PSMB7.

The protein localises to the cytoplasm. It is found in the nucleus. Functionally, component of the 20S core proteasome complex involved in the proteolytic degradation of most intracellular proteins. This complex plays numerous essential roles within the cell by associating with different regulatory particles. Associated with two 19S regulatory particles, forms the 26S proteasome and thus participates in the ATP-dependent degradation of ubiquitinated proteins. The 26S proteasome plays a key role in the maintenance of protein homeostasis by removing misfolded or damaged proteins that could impair cellular functions, and by removing proteins whose functions are no longer required. Associated with the PA200 or PA28, the 20S proteasome mediates ubiquitin-independent protein degradation. This type of proteolysis is required in several pathways including spermatogenesis (20S-PA200 complex) or generation of a subset of MHC class I-presented antigenic peptides (20S-PA28 complex). This Bos taurus (Bovine) protein is Proteasome subunit alpha type-4 (PSMA4).